The primary structure comprises 364 residues: Apelin receptor (364 aa).

The Extracellular portion of the chain corresponds to 1–39 (MATDEFSSSTTPSYDYYDYTNESGLPPCDETDWDLSYSL). Asn-21 is a glycosylation site (N-linked (GlcNAc...) asparagine). 2 disulfides stabilise this stretch: Cys-28-Cys-288 and Cys-110-Cys-187. A helical transmembrane segment spans residues 40–60 (LPVFYMIVFVLGLSGNGVVIF). Over 61-78 (TVWKAKPKRRSADTYIGN) the chain is Cytoplasmic. A helical transmembrane segment spans residues 79–99 (LALADLAFVVTLPLWATYTAL). Over 100 to 112 (GFHWPFGSALCKL) the chain is Extracellular. Residues 113–133 (SSYLVLLNMFASVFCLTCLSF) traverse the membrane as a helical segment. Residues 134–153 (DRYLAIVHSLSSAKLRSRSS) lie on the Cytoplasmic side of the membrane. Residues 154–174 (ILVSLAVIWLFSGLLALPSLI) traverse the membrane as a helical segment. Residues 175–201 (LRDTRVEGNNTICDLDFSGVSSKENEN) are Extracellular-facing. Asn-183 carries an N-linked (GlcNAc...) asparagine glycan. The helical transmembrane segment at 202–222 (FWIGGLSILTTVPGFLLPLLL) threads the bilayer. The Cytoplasmic portion of the chain corresponds to 223–250 (MTIFYCFIGGKVTMHFQNLKKEEQKKKR). Residues 251–271 (LLKIIITLVVVFAICWLPFHI) traverse the membrane as a helical segment. The Extracellular segment spans residues 272–298 (LKTIHFLDLMGFLELSCSTQNIIVSLH). A helical transmembrane segment spans residues 299–319 (PYATCLAYINSCLNPFLYAFF). The Cytoplasmic portion of the chain corresponds to 320–364 (DLRFRSQCFFFFGFKKALQGHLSNTSSSLSAQTQKSEIHSLATKV).

Belongs to the G-protein coupled receptor 1 family.

Its subcellular location is the cell membrane. G protein-coupled receptor for peptide hormones apelin (apln) and apelin receptor early endogenous ligand (apela), that plays a role in the regulation of normal cardiovascular function and fluid homeostasis. When acting as apelin receptor, activates both G(i) protein pathway that inhibits adenylate cyclase activity, and the beta-arrestin pathway that promotes internalization of the receptor. Also functions as mechanoreceptor that is activated by pathological stimuli in a G-protein-independent fashion to induce beta-arrestin signaling, hence eliciting cardiac hypertrophy. However, the presence of apelin ligand blunts cardiac hypertrophic induction from APLNR/APJ on response to pathological stimuli. Plays a key role in early development such as gastrulation, blood vessels formation and heart morphogenesis by acting as a receptor for apela hormone, promoting endoderm and mesendoderm cell migration and regulating the migration of cells fated to become myocardial progenitors, respectively. Promotes angioblast migration toward the embryonic midline, i.e. the position of the future vessel formation, during vasculogenesis. May promote sinus venosus (SV)-derived endothelial cells migration into the developing heart to promote coronary blood vessel development. Required for cardiovascular development, particularly for intersomitic vein angiogenesis. Plays also a role in various processes in adults such as regulation of blood vessel formation, blood pressure, heart contractility, and heart failure. Acts upstream of the i/o type of G-alpha proteins in the differentiation of endothelium, erythroid cells, myeloid cells and cardiomyocytes. This is Apelin receptor (aplnr) from Xenopus tropicalis (Western clawed frog).